The primary structure comprises 1257 residues: Liprin-alpha-2 (1257 aa).

The tract at residues 1 to 29 (MMCEVMPTINEDTPMSQRGSQSSGSDSDS) is disordered. A compositionally biased stretch (low complexity) spans 16-26 (SQRGSQSSGSD). 2 coiled-coil regions span residues 29-154 (SHFE…SLRM) and 185-235 (KALD…SSEG). Ser-236 bears the Phosphoserine mark. Thr-237 carries the phosphothreonine modification. Ser-239 carries the post-translational modification Phosphoserine. Coiled-coil stretches lie at residues 264-541 (TDDT…SLIE) and 643-695 (HSDA…GLNL). Positions 439-463 (GQLEEKNQELQRARQREKMNEEHNK) are disordered. A phosphoserine mark is found at Ser-687 and Ser-689. Residues 709–725 (TASSLASSSPPSGHSTP) are compositionally biased toward low complexity. Disordered regions lie at residues 709 to 738 (TASS…EMDR) and 759 to 834 (EEDG…KSSI). A compositionally biased stretch (polar residues) spans 787–802 (TLPSSYHNDARSSLSA). Phosphoserine occurs at positions 817 and 820. SAM domains lie at 898–964 (WDGP…MVSL), 1020–1084 (NHEW…LKRL), and 1108–1177 (WSND…LLAL). Positions 1081–1107 (LKRLNYDRKELERRREASQHEIKDVLV) form a coiled coil.

It belongs to the liprin family. Liprin-alpha subfamily. As to quaternary structure, forms homodimers and heterodimers with liprins-alpha and liprins-beta. Interacts with the second PTPase domain of PTPRD, PTPRF and PTPRS. Interacts with KIF1A; the interaction decreases in presence of calcium.

Its subcellular location is the cytoplasm. The protein localises to the cell surface. The protein resides in the cell projection. It is found in the dendritic spine. Functionally, alters PTPRF cellular localization and induces PTPRF clustering. May regulate the disassembly of focal adhesions. May localize receptor-like tyrosine phosphatases type 2A at specific sites on the plasma membrane, possibly regulating their interaction with the extracellular environment and their association with substrates. In neuronal cells, is a scaffolding protein in the dendritic spines which acts as immobile postsynaptic post able to recruit KIF1A-driven dense core vesicles to dendritic spines. The polypeptide is Liprin-alpha-2 (Ppfia2) (Mus musculus (Mouse)).